An 82-amino-acid chain; its full sequence is Antitoxin MazE8 (82 aa).

As to quaternary structure, forms a complex with cognate toxin MazF8.

Its function is as follows. Antitoxin component of a type II toxin-antitoxin (TA) system. Its cognate toxin is MazF8. The polypeptide is Antitoxin MazE8 (mazE8) (Mycobacterium tuberculosis (strain ATCC 25618 / H37Rv)).